Here is a 77-residue protein sequence, read N- to C-terminus: Acyl carrier protein (77 aa).

The 75-residue stretch at Met1 to Thr75 folds into the Carrier domain. Ser35 carries the post-translational modification O-(pantetheine 4'-phosphoryl)serine.

It belongs to the acyl carrier protein (ACP) family. In terms of processing, 4'-phosphopantetheine is transferred from CoA to a specific serine of apo-ACP by AcpS. This modification is essential for activity because fatty acids are bound in thioester linkage to the sulfhydryl of the prosthetic group.

It is found in the cytoplasm. It functions in the pathway lipid metabolism; fatty acid biosynthesis. In terms of biological role, carrier of the growing fatty acid chain in fatty acid biosynthesis. This is Acyl carrier protein from Clostridium acetobutylicum (strain ATCC 824 / DSM 792 / JCM 1419 / IAM 19013 / LMG 5710 / NBRC 13948 / NRRL B-527 / VKM B-1787 / 2291 / W).